We begin with the raw amino-acid sequence, 511 residues long: Maturase K (511 aa).

This sequence belongs to the intron maturase 2 family. MatK subfamily.

It is found in the plastid. It localises to the chloroplast. Usually encoded in the trnK tRNA gene intron. Probably assists in splicing its own and other chloroplast group II introns. The polypeptide is Maturase K (Hordeum jubatum (Foxtail barley)).